The sequence spans 337 residues: Probable arabinose 5-phosphate isomerase (337 aa).

The SIS domain occupies 58-201 (VIDLILACEG…AVSLITARNF (144 aa)). Substrate-binding positions include 92–93 (GT), H99, H105, 131–140 (KLIPSLKNFG), 165–167 (TVE), T237, and D290. Zn(2+) is bound at residue H99. Residues 227-284 (MQTRLPTILPTTNFTDCLTVMNEGRMGVALVMENEQLKGIITDGDIRRALTANGAGTL) form the CBS 1 domain. The region spanning 292 to 337 (MTSSPKTIHQDEFLSKAEDFMKAKKIHSLVVVNDENHVVGLVEFSS) is the CBS 2 domain.

Belongs to the SIS family. GutQ/KpsF subfamily.

The catalysed reaction is D-arabinose 5-phosphate = D-ribulose 5-phosphate. Catalyzes the reversible aldol-ketol isomerization between D-ribulose 5-phosphate (Ru5P) and D-arabinose 5-phosphate (A5P). This chain is Probable arabinose 5-phosphate isomerase, found in Haemophilus influenzae (strain ATCC 51907 / DSM 11121 / KW20 / Rd).